The sequence spans 515 residues: MSTRVYPAQVDVAIVGSGPAGATYARILSERASSATIAMFEVGPTVSDPPGAHVKNIADADERAHAQRRSEGPHAREDDDRVGGIVKSAQRRARPGTYLLESGYQADGEDGLPVAAFSSNVGGMAAHWTGACPRPNDSERIGFLDETGELDELLSEGERLLGVTTDAFDASPYAGIVRERLAAVEDAHRDADERVQRMPLAVHRRDDGPLVWSGSDVVLGDITRGNPNFTLFDESLVTRVLVEDGRAAGVVVTDVRTGERRDVRARFVVVAADALRTPQLLWASGIRPDALGRYLNDQAQIVFAVRMRDFTPVVDADGVPQTGLSEYTGVTWVPFTDDMPFHGQVMQLDASPVKLADDDPAAPGSIVGLGLFCAKDLQASDRVAFSDSDVDGYGMPAMQLHYTLSDRDHATIDRAKAEIVRLGKAIGDPLDDRPFVMPLGASLHYQGTVRMGLADDGASVCSPDSEVWGAPGLFVAGNGVIPTATACNPTLTGVALAVRGARHIADEITADLASV.

Glu-41 is an FAD binding site. A compositionally biased stretch (basic and acidic residues) spans 62-82 (ERAHAQRRSEGPHAREDDDRV). Positions 62–90 (ERAHAQRRSEGPHAREDDDRVGGIVKSAQ) are disordered. Residues Ser-118, Asn-120, Met-124, Thr-129, Ala-131, and Val-237 each coordinate FAD. Catalysis depends on His-444, which acts as the Proton acceptor. Positions 478 and 490 each coordinate FAD.

Belongs to the GMC oxidoreductase family. As to quaternary structure, monomer. It depends on FAD as a cofactor.

The enzyme catalyses isoorientin + O2 = 3''-dehydroisoorientin + H2O2. The catalysed reaction is mangiferin + O2 = 3'-dehydromangiferin + H2O2. FAD-dependent C-glycoside-metabolizing enzyme that participates in the degradation of certain C-glycosides by catalyzing the oxidation of the hydroxyl group at the C3 position of the sugar moiety. Shows oxidase activity toward C-glycosides such as isoorientin and mangiferin but cannot use carminic acid, puerarin, orientin or aloesin. Shows weak activity (100 to 1000-fold lower) with O-glycosides. Probably plays a crucial role in the metabolism of C-glycosides in nature. In Microbacterium trichothecenolyticum (Aureobacterium trichothecenolyticum), this protein is C-glycoside 3-oxidase.